Consider the following 286-residue polypeptide: uncharacterized protein (286 aa).

Residues M1–A47 are disordered. Basic and acidic residues predominate over residues G9–N26. G93–T100 is a GTP binding site.

This sequence belongs to the SIMIBI class G3E GTPase family. UreG subfamily.

It is found in the cytoplasm. The protein localises to the nucleus. Its function is as follows. Probably facilitates nickel incorporation. This is an uncharacterized protein from Schizosaccharomyces pombe (strain 972 / ATCC 24843) (Fission yeast).